The chain runs to 342 residues: D-erythrose-4-phosphate dehydrogenase (342 aa).

Arginine 12–isoleucine 13 provides a ligand contact to NAD(+). Substrate is bound by residues serine 154–threonine 156, arginine 200, threonine 213–lysine 214, and arginine 236. Cysteine 155 functions as the Nucleophile in the catalytic mechanism. Asparagine 318 is a binding site for NAD(+).

Belongs to the glyceraldehyde-3-phosphate dehydrogenase family. Epd subfamily. As to quaternary structure, homotetramer.

The protein localises to the cytoplasm. It catalyses the reaction D-erythrose 4-phosphate + NAD(+) + H2O = 4-phospho-D-erythronate + NADH + 2 H(+). It participates in cofactor biosynthesis; pyridoxine 5'-phosphate biosynthesis; pyridoxine 5'-phosphate from D-erythrose 4-phosphate: step 1/5. Catalyzes the NAD-dependent conversion of D-erythrose 4-phosphate to 4-phosphoerythronate. The polypeptide is D-erythrose-4-phosphate dehydrogenase (Salmonella arizonae (strain ATCC BAA-731 / CDC346-86 / RSK2980)).